Here is an 891-residue protein sequence, read N- to C-terminus: UPF0182 protein Glov_0814 (891 aa).

Helical transmembrane passes span 6–26 (LTPILFALFIIVPALTYLLAY), 51–71 (GIGVLFGGLLFAFLVPNLLYA), 102–122 (IGVLIAAGIALFVGQFGALQW), 164–184 (FMLLATLLVTLLVYYIRGGIA), 202–222 (ILLALFSCVIAAGFYLEGFGL), 244–264 (TLTTLAFITPVAGLLLAFGLW), and 266–286 (GTWRLVLLPPIVVVAAYMIGM).

This sequence belongs to the UPF0182 family.

The protein resides in the cell membrane. This is UPF0182 protein Glov_0814 from Trichlorobacter lovleyi (strain ATCC BAA-1151 / DSM 17278 / SZ) (Geobacter lovleyi).